Consider the following 1047-residue polypeptide: Probable sucrose-phosphate synthase 2 (1047 aa).

The segment covering 101–123 (EGKNAKREAKREREREKARREVT) has biased composition (basic and acidic residues). The interval 101–153 (EGKNAKREAKREREREKARREVTAEMSEDFSEGEKADLPGEIPTPSDNNTKGR) is disordered. S127, S131, and S159 each carry phosphoserine. The disordered stretch occupies residues 712 to 731 (KSGSNNGVDTNLDAEDRAAE).

This sequence belongs to the glycosyltransferase 1 family. As to quaternary structure, homodimer or homotetramer. In terms of tissue distribution, expressed in roots, cauline leaves, flower buds, flowers and anthers. Highly expressed in maturing nectaries.

It carries out the reaction beta-D-fructose 6-phosphate + UDP-alpha-D-glucose = sucrose 6(F)-phosphate + UDP + H(+). It participates in glycan biosynthesis; sucrose biosynthesis; sucrose from D-fructose 6-phosphate and UDP-alpha-D-glucose: step 1/2. With respect to regulation, activity is regulated by phosphorylation and moderated by concentration of metabolites and light. Functionally, plays a role in photosynthetic sucrose synthesis by catalyzing the rate-limiting step of sucrose biosynthesis from UDP-glucose and fructose- 6-phosphate. Involved in the regulation of carbon partitioning in the leaves of plants. May regulate the synthesis of sucrose and therefore play a major role as a limiting factor in the export of photoassimilates out of the leaf. Plays a role for sucrose availability that is essential for plant growth and fiber elongation. Required for nectar secretion. This is Probable sucrose-phosphate synthase 2 (SPS2) from Arabidopsis thaliana (Mouse-ear cress).